Here is a 426-residue protein sequence, read N- to C-terminus: MRRCMPLVAASVAALMLAGCGGGDGDPSLSTASVSATDTTTLKPAATSTTSSVWLTLAKDSAAFTVSGTRTVRYGAGSAWVEKSVSGSGRCTSTFFGKDPAAGVAKVCQLLQGTGTLLWRGVSLAGAEFGEGSLPGTYGSNYIYPSADSVTYYKNKGMNLVRLPFRWERLQPTLNQVFDANELSRLTGFVNAVTATGQTVLLDPHNYARYYGNVIGSSAVPNSAYADFWRRLATQFKSNPRVILGLMNEPNSMPTEQWLSGANAELAAIRSANASNVVFVPGNAWTGAHSWNQNWYGTPNGTVMKGINDPGHNLVFEVHQYLDGDSSGQSANCVSATIGAQRLQDFTTWLRSNGYRGFLGEFGAASNDTCNQAVSNMLTFVKNNADVWTGWAWWAGGPWWGGYMYSIEPSNGVDKPQMSVLAPYLK.

The N-terminal stretch at 1–19 (MRRCMPLVAASVAALMLAG) is a signal peptide. Cysteine 20 carries the N-palmitoyl cysteine lipid modification. The S-diacylglycerol cysteine moiety is linked to residue cysteine 20. A propeptide spanning residues 20-45 (CGGGDGDPSLSTASVSATDTTTLKPA) is cleaved from the precursor. Glutamate 249 acts as the Proton donor in catalysis. The active-site Nucleophile is the glutamate 361.

This sequence belongs to the glycosyl hydrolase 5 (cellulase A) family.

The protein resides in the cell membrane. The catalysed reaction is Endohydrolysis of (1-&gt;4)-beta-D-glucosidic linkages in cellulose, lichenin and cereal beta-D-glucans.. The sequence is that of Endoglucanase (egl) from Ralstonia solanacearum (Pseudomonas solanacearum).